The following is a 141-amino-acid chain: DCNTLKRFKVKHQWQQVFSGEHHRTEFSLHFWKEFLHDHPDLVSLFKRVQGENIYSPEFQAHGIRVLAGLDSVIGVLDEDDTFTVQLAHLKAQHTERGTKPEYFDLFGTQLFDILGDKLGTHFDQAAWRDCYAVIAAGIKP.

In terms of domain architecture, Globin spans 1–141 (DCNTLKRFKV…YAVIAAGIKP (141 aa)). Residues Cys-2 and Cys-131 are joined by a disulfide bond. Residue His-94 participates in heme b binding.

Belongs to the globin family. As to quaternary structure, the giant hemoglobins of worms are formed of a monomeric subunit and a disulfide-bonded trimer. This subunit is monomeric.

The protein resides in the secreted. The polypeptide is Extracellular globin-1 (Metaphire sieboldi (Earthworm)).